We begin with the raw amino-acid sequence, 496 residues long: Cytosol aminopeptidase (496 aa).

Lysine 258 and aspartate 263 together coordinate Mn(2+). Lysine 270 is an active-site residue. Mn(2+) is bound by residues aspartate 281, aspartate 340, and glutamate 342. Residue arginine 344 is part of the active site.

The protein belongs to the peptidase M17 family. Mn(2+) is required as a cofactor.

The protein resides in the cytoplasm. It catalyses the reaction Release of an N-terminal amino acid, Xaa-|-Yaa-, in which Xaa is preferably Leu, but may be other amino acids including Pro although not Arg or Lys, and Yaa may be Pro. Amino acid amides and methyl esters are also readily hydrolyzed, but rates on arylamides are exceedingly low.. It carries out the reaction Release of an N-terminal amino acid, preferentially leucine, but not glutamic or aspartic acids.. Its function is as follows. Presumably involved in the processing and regular turnover of intracellular proteins. Catalyzes the removal of unsubstituted N-terminal amino acids from various peptides. The chain is Cytosol aminopeptidase (pepA) from Helicobacter pylori (strain ATCC 700392 / 26695) (Campylobacter pylori).